We begin with the raw amino-acid sequence, 154 residues long: Interleukin-7 (154 aa).

An N-terminal signal peptide occupies residues 1-25; that stretch reads MFHVSFRYIFGIPPLILVLLPVTSS. 3 disulfide bridges follow: Cys27/Cys145, Cys58/Cys133, and Cys71/Cys116. N-linked (GlcNAc...) asparagine glycosylation is found at Asn94 and Asn115.

This sequence belongs to the IL-7/IL-9 family. As to quaternary structure, interacts with IL7R and CSF2RG. In terms of processing, three disulfide bonds are present.

Its subcellular location is the secreted. Hematopoietic cytokine that plays an essential role in the development, expansion, and survival of naive and memory T-cells and B-cells thereby regulating the number of mature lymphocytes and maintaining lymphoid homeostasis. Mechanistically, exerts its biological effects through a receptor composed of IL7RA subunit and the cytokine receptor common subunit gamma/CSF2RG. Binding to the receptor leads to activation of various kinases including JAK1 or JAK3 depending on the cell type and subsequently propagation of signals through activation of several downstream signaling pathways including the PI3K/Akt/mTOR or the JAK-STAT5. This is Interleukin-7 (Il7) from Rattus norvegicus (Rat).